The sequence spans 356 residues: Protein ATP1B4 (356 aa).

Topologically, residues 1 to 109 are nuclear; sequence MRRQLRSRRA…SLARTGQSRS (109 aa). Residues 32–77 form a disordered region; that stretch reads LADEEEEAEEEAQVMMVPGLEEEEEEEEGKEEEEEREEEEGQGQST. Acidic residues-rich tracts occupy residues 33-43 and 51-72; these read ADEEEEAEEEA and LEEEEEEEEGKEEEEEREEEEG. The chain crosses the membrane as a helical; Signal-anchor for type II membrane protein span at residues 110–130; sequence LILVIYFFFYASLAAVITLFI. The Perinuclear space portion of the chain corresponds to 131 to 356; it reads YMLFLAISPY…RIIFTLNIET (226 aa).

The protein belongs to the X(+)/potassium ATPases subunit beta family. Does not associate with known Na,K-ATPase alpha-subunits. Associates with a SMAD7-transcriptional complex. Interacts with SNW1 and TOR1AIP1. Expressed in perinatal myocytes (at protein level). Expressed during postnatal development in skeletal muscle and heart.

It localises to the nucleus inner membrane. Its function is as follows. May act as a transcriptional coregulator during muscle development through its interaction with SNW1. Has lost its ancestral function as a Na,K-ATPase beta-subunit. The protein is Protein ATP1B4 (Atp1b4) of Rattus norvegicus (Rat).